Here is a 168-residue protein sequence, read N- to C-terminus: Endoribonuclease YbeY (168 aa).

3 residues coordinate Zn(2+): histidine 132, histidine 136, and histidine 142.

Belongs to the endoribonuclease YbeY family. Zn(2+) is required as a cofactor.

The protein resides in the cytoplasm. Its function is as follows. Single strand-specific metallo-endoribonuclease involved in late-stage 70S ribosome quality control and in maturation of the 3' terminus of the 16S rRNA. This chain is Endoribonuclease YbeY, found in Clostridium perfringens (strain ATCC 13124 / DSM 756 / JCM 1290 / NCIMB 6125 / NCTC 8237 / Type A).